A 259-amino-acid polypeptide reads, in one-letter code: UPF0739 protein C1orf74 homolog (259 aa).

Belongs to the UPF0739 family.

This Danio rerio (Zebrafish) protein is UPF0739 protein C1orf74 homolog.